The primary structure comprises 1314 residues: Synergin gamma (1314 aa).

Residues 115–155 are a coiled coil; that stretch reads MQKQFAEEQQKRFEQQQKLLEEERKRRQFEEQKQKLRLLSS. The segment at 178 to 199 is disordered; sequence GFSRDAKMHPTPASHPKKPGPS. The EH domain occupies 295–388; the sequence is NESLVPDAYK…QFPAAPIPTL (94 aa). The DFXDF motif 1 motif lies at 457-461; sequence DFQDF. Positions 460-498 are disordered; the sequence is DFQDASKSGSLDDSFSDFQELPASSKTSNSQHGNSAPSL. A compositionally biased stretch (polar residues) spans 462 to 496; it reads QDASKSGSLDDSFSDFQELPASSKTSNSQHGNSAP. Phosphoserine is present on Ser473. Lys513 is modified (N6-acetyllysine). An interaction with AP1G1 region spans residues 518-786; the sequence is KGIAADKSSE…ADFHSSKFSS (269 aa). Position 580 is a phosphoserine (Ser580). Positions 666–678 are interaction with AP1G1, AP1G2 and GGA1; it reads LADDFGEFSLFGE. A DFXDF motif 2 motif is present at residues 690 to 694; sequence DFADF. A Phosphoserine modification is found at Ser720. At Lys744 the chain carries N6-acetyllysine. Residues Ser752 and Ser772 each carry the phosphoserine modification. The DFXDF motif 3 motif lies at 775-779; that stretch reads DFADF. Phosphoserine occurs at positions 812, 852, 855, 909, 919, and 935. 2 disordered regions span residues 972 to 1026 and 1073 to 1102; these read PQTS…DFGE and SLSLGDKEISRSSPSPALEQPFRDRSNTLN. Positions 976–990 are enriched in basic and acidic residues; sequence EQKEYENRDYKDFTK. The span at 1001-1019 shows a compositional bias: polar residues; sequence EATCPSPASSGASQETPNE. Phosphoserine is present on residues Ser1006, Ser1073, Ser1075, Ser1087, and Ser1098. At Thr1100 the chain carries Phosphothreonine.

As to quaternary structure, self-associates. Interacts with GGA1 (via GAE domain). Interacts with GGA2 and GGA3. Interacts with AP1G1 (via GAE domain), a subunit of adapter protein complex AP-1. Interacts with AP1G2 (via GAE domain) a subunit of adapter protein complex AP-1. Component of the aftiphilin/p200/gamma-synergin complex, at least composed of AFTPH/aftiphilin, HEATR5B/p200a and SYNRG/gamma-synergin, which plays a role in the AP1G1/AP-1-mediated trafficking of transferrin from early to recycling endosomes. Within the complex interacts with AFTPH/aftiphilin and HEATR5B/p200a; the interactions are direct. Interacts (via EH domain) with SCAMP1.

The protein resides in the cytoplasm. It is found in the golgi apparatus. It localises to the trans-Golgi network membrane. The protein localises to the perinuclear region. Its subcellular location is the cytoplasmic vesicle. The protein resides in the clathrin-coated vesicle. In terms of biological role, plays a role in endocytosis and/or membrane trafficking at the trans-Golgi network (TGN). May act by linking the adapter protein complex AP-1 to other proteins. Component of clathrin-coated vesicles. Component of the aftiphilin/p200/gamma-synergin complex, which plays roles in AP1G1/AP-1-mediated protein trafficking including the trafficking of transferrin from early to recycling endosomes, and the membrane trafficking of furin and the lysosomal enzyme cathepsin D between the trans-Golgi network (TGN) and endosomes. The chain is Synergin gamma from Homo sapiens (Human).